A 239-amino-acid chain; its full sequence is MPKSKRDKKVSLTKTAKKGLELKQNLIEELRKCVDTYKYLFIFSVANMRNSKLKDIRNAWKHSRMFFGKNKVMMVALGRSPSDEYKDNLHQVSKKLRGEVGLLFTNRTKEEVNEWFTKYTEMDFARAGNKATLTVSLDPGPLKQFPHSMEPQLRQLGLPTALKKGVVTLLSDYEVCKEGDVLTPEQARILKLFGYEMAEFKVIIKYMWDAQSGRFQQMDDDLPESAPESEGESEEEDDS.

A disordered region spans residues 216 to 239 (QQMDDDLPESAPESEGESEEEDDS). Residues 218 to 239 (MDDDLPESAPESEGESEEEDDS) show a composition bias toward acidic residues. Residues Ser-225, Ser-229, and Ser-233 each carry the phosphoserine modification.

This sequence belongs to the universal ribosomal protein uL10 family. Associates with the pre-60S ribosomal particle. Interacts with MINAS-60 (product of an alternative open reading frame of RBM10).

It localises to the nucleus. The protein resides in the nucleolus. Its subcellular location is the cytoplasm. Functionally, component of the ribosome assembly machinery. Nuclear paralog of the ribosomal protein P0, it binds pre-60S subunits at an early stage of assembly in the nucleolus, and is replaced by P0 in cytoplasmic pre-60S subunits and mature 80S ribosomes. This is mRNA turnover protein 4 homolog (Mrto4) from Mus musculus (Mouse).